The sequence spans 81 residues: MTMSLEVFEKLESKVQQAIDTITLLQMEIEELKEKNNALAQEVHSAQNGREELERENQQLREQQNGWQDRLQALLGRMEEV.

A coiled-coil region spans residues 5–81 (LEVFEKLESK…QALLGRMEEV (77 aa)). The tract at residues 43–64 (VHSAQNGREELERENQQLREQQ) is disordered. Basic and acidic residues predominate over residues 49-59 (GREELERENQQ).

It belongs to the ZapB family. Homodimer. The ends of the coiled-coil dimer bind to each other, forming polymers. Interacts with FtsZ.

It localises to the cytoplasm. Non-essential, abundant cell division factor that is required for proper Z-ring formation. It is recruited early to the divisome by direct interaction with FtsZ, stimulating Z-ring assembly and thereby promoting cell division earlier in the cell cycle. Its recruitment to the Z-ring requires functional FtsA or ZipA. This Enterobacter sp. (strain 638) protein is Cell division protein ZapB.